The chain runs to 409 residues: Imidazolonepropionase (409 aa).

H70 and H72 together coordinate Fe(3+). Residues H70 and H72 each contribute to the Zn(2+) site. Residues R79, Y137, and H164 each contribute to the 4-imidazolone-5-propanoate site. Y137 contacts N-formimidoyl-L-glutamate. Position 225 (H225) interacts with Fe(3+). Residue H225 coordinates Zn(2+). Residue Q228 participates in 4-imidazolone-5-propanoate binding. Residues N314 and G316 each contribute to the N-formimidoyl-L-glutamate site. A 4-imidazolone-5-propanoate-binding site is contributed by T317.

It belongs to the metallo-dependent hydrolases superfamily. HutI family. Requires Zn(2+) as cofactor. The cofactor is Fe(3+).

Its subcellular location is the cytoplasm. It carries out the reaction 4-imidazolone-5-propanoate + H2O = N-formimidoyl-L-glutamate. Its pathway is amino-acid degradation; L-histidine degradation into L-glutamate; N-formimidoyl-L-glutamate from L-histidine: step 3/3. In terms of biological role, catalyzes the hydrolytic cleavage of the carbon-nitrogen bond in imidazolone-5-propanoate to yield N-formimidoyl-L-glutamate. It is the third step in the universal histidine degradation pathway. The polypeptide is Imidazolonepropionase (Paenarthrobacter aurescens (strain TC1)).